Consider the following 619-residue polypeptide: 1-deoxy-D-xylulose-5-phosphate synthase (619 aa).

Thiamine diphosphate is bound by residues His-74 and 115 to 117 (GHS). Asp-146 contacts Mg(2+). Thiamine diphosphate-binding positions include 147–148 (GA), Asn-175, Tyr-285, and Glu-365. Asn-175 contributes to the Mg(2+) binding site.

This sequence belongs to the transketolase family. DXPS subfamily. As to quaternary structure, homodimer. Mg(2+) serves as cofactor. Requires thiamine diphosphate as cofactor.

The catalysed reaction is D-glyceraldehyde 3-phosphate + pyruvate + H(+) = 1-deoxy-D-xylulose 5-phosphate + CO2. It functions in the pathway metabolic intermediate biosynthesis; 1-deoxy-D-xylulose 5-phosphate biosynthesis; 1-deoxy-D-xylulose 5-phosphate from D-glyceraldehyde 3-phosphate and pyruvate: step 1/1. In terms of biological role, catalyzes the acyloin condensation reaction between C atoms 2 and 3 of pyruvate and glyceraldehyde 3-phosphate to yield 1-deoxy-D-xylulose-5-phosphate (DXP). This is 1-deoxy-D-xylulose-5-phosphate synthase from Clostridium acetobutylicum (strain ATCC 824 / DSM 792 / JCM 1419 / IAM 19013 / LMG 5710 / NBRC 13948 / NRRL B-527 / VKM B-1787 / 2291 / W).